Consider the following 270-residue polypeptide: Undecaprenyl-diphosphatase (270 aa).

Helical transmembrane passes span 1 to 21 (MDLFNAAILALIQGITEFLPI), 39 to 59 (QGLVFDIAANSGSLAAVMLYF), 87 to 107 (SHLVLQLALATIPVGLVGLAC), 114 to 134 (VARDPMIIATTSILFGLLLWW), 147 to 167 (ALSWRQVGIIGIAQAFALIPG), 193 to 213 (FLMAIPVGILAALLDLKDLFA), 223 to 243 (FLGVGFCVSGLSAYMVIHGLL), and 250 to 270 (TMTPFVVYRVVLGVVIFATLG).

The protein belongs to the UppP family.

It is found in the cell inner membrane. The catalysed reaction is di-trans,octa-cis-undecaprenyl diphosphate + H2O = di-trans,octa-cis-undecaprenyl phosphate + phosphate + H(+). Functionally, catalyzes the dephosphorylation of undecaprenyl diphosphate (UPP). Confers resistance to bacitracin. The polypeptide is Undecaprenyl-diphosphatase (Magnetococcus marinus (strain ATCC BAA-1437 / JCM 17883 / MC-1)).